We begin with the raw amino-acid sequence, 316 residues long: Glutathione synthetase (316 aa).

In terms of domain architecture, ATP-grasp spans 124-311 (NEKLAALLFP…IAGLLFDAIE (188 aa)). 151-208 (FVLEHGQAVLKPLDGMGGRSIFRSGSGDPNLNVILETLTDGNRKLTLAQRFIPDITAG) serves as a coordination point for ATP. Residues Glu-282 and Asn-284 each coordinate Mg(2+).

This sequence belongs to the prokaryotic GSH synthase family. The cofactor is Mg(2+). Mn(2+) is required as a cofactor.

It carries out the reaction gamma-L-glutamyl-L-cysteine + glycine + ATP = glutathione + ADP + phosphate + H(+). It participates in sulfur metabolism; glutathione biosynthesis; glutathione from L-cysteine and L-glutamate: step 2/2. This is Glutathione synthetase from Xanthomonas axonopodis pv. citri (strain 306).